Here is a 444-residue protein sequence, read N- to C-terminus: UDP-N-acetylglucosamine 1-carboxyvinyltransferase (444 aa).

Residue 22-23 (KN) participates in phosphoenolpyruvate binding. Arg94 contributes to the UDP-N-acetyl-alpha-D-glucosamine binding site. The active-site Proton donor is the Asp119. Residues Asp309 and Val331 each contribute to the UDP-N-acetyl-alpha-D-glucosamine site.

It belongs to the EPSP synthase family. MurA subfamily.

Its subcellular location is the cytoplasm. It catalyses the reaction phosphoenolpyruvate + UDP-N-acetyl-alpha-D-glucosamine = UDP-N-acetyl-3-O-(1-carboxyvinyl)-alpha-D-glucosamine + phosphate. Its pathway is cell wall biogenesis; peptidoglycan biosynthesis. Its function is as follows. Cell wall formation. Adds enolpyruvyl to UDP-N-acetylglucosamine. This is UDP-N-acetylglucosamine 1-carboxyvinyltransferase from Chlamydia trachomatis serovar D (strain ATCC VR-885 / DSM 19411 / UW-3/Cx).